Here is a 209-residue protein sequence, read N- to C-terminus: D-aminoacyl-tRNA deacylase 1 (209 aa).

Val-4, Gln-6, and Cys-28 together coordinate Mg(2+). The Gly-cisPro motif, important for rejection of L-amino acids signature appears at 139–140 (GP). Residues 142-209 (TIELESPAPG…EGDVSSEREP (68 aa)) are disordered. Basic and acidic residues-rich tracts occupy residues 159 to 170 (QLSKLEKQQQRK) and 181 to 194 (SSKE…EDRS). Residues Ser-197, Ser-204, and Ser-205 each carry the phosphoserine modification.

This sequence belongs to the DTD family. In terms of assembly, homodimer. Interacts with CDC45 and TOPBP1. Post-translationally, preferentially phosphorylated in cells arrested early in S phase. Phosphorylation in the C-terminus weakens the interaction with CDC45. Expressed in many adult and fetal tissues. Highest levels in testis, ovary, spleen and in adult and fetal brain.

It is found in the nucleus. The protein resides in the cytoplasm. The catalysed reaction is glycyl-tRNA(Ala) + H2O = tRNA(Ala) + glycine + H(+). It catalyses the reaction a D-aminoacyl-tRNA + H2O = a tRNA + a D-alpha-amino acid + H(+). In terms of biological role, possible ATPase involved in DNA replication, may facilitate loading of CDC45 onto pre-replication complexes. Functionally, an aminoacyl-tRNA editing enzyme that deacylates mischarged D-aminoacyl-tRNAs. Also deacylates mischarged glycyl-tRNA(Ala), protecting cells against glycine mischarging by AlaRS. Acts via tRNA-based rather than protein-based catalysis; rejects L-amino acids rather than detecting D-amino acids in the active site. By recycling D-aminoacyl-tRNA to D-amino acids and free tRNA molecules, this enzyme counteracts the toxicity associated with the formation of D-aminoacyl-tRNA entities in vivo and helps enforce protein L-homochirality. This Homo sapiens (Human) protein is D-aminoacyl-tRNA deacylase 1 (DTD1).